Consider the following 622-residue polypeptide: 1,4-alpha-glucan branching enzyme GlgB (622 aa).

Residue Asp-300 is the Nucleophile of the active site. Residue Glu-351 is the Proton donor of the active site.

This sequence belongs to the glycosyl hydrolase 13 family. GlgB subfamily. Monomer.

The catalysed reaction is Transfers a segment of a (1-&gt;4)-alpha-D-glucan chain to a primary hydroxy group in a similar glucan chain.. Its pathway is glycan biosynthesis; glycogen biosynthesis. Catalyzes the formation of the alpha-1,6-glucosidic linkages in glycogen by scission of a 1,4-alpha-linked oligosaccharide from growing alpha-1,4-glucan chains and the subsequent attachment of the oligosaccharide to the alpha-1,6 position. The chain is 1,4-alpha-glucan branching enzyme GlgB from Streptococcus agalactiae serotype V (strain ATCC BAA-611 / 2603 V/R).